Reading from the N-terminus, the 449-residue chain is Transcription factor AP-2 gamma (449 aa).

Lys-10 participates in a covalent cross-link: Glycyl lysine isopeptide (Lys-Gly) (interchain with G-Cter in SUMO). The disordered stretch occupies residues 13–58 (EDCEDRHDSSSNGNPRIPHLSSPGQHLYSPAPPLSHTGVAEYQPPP). A PPxY motif motif is present at residues 59–64 (YFPPPY). The interval 94 to 130 (AATGSQQQAWPGRQSQEGSSLASHHSRSASLIPHISG) is disordered. Residues 95–111 (ATGSQQQAWPGRQSQEG) show a composition bias toward polar residues. Over residues 112-124 (SSLASHHSRSASL) the composition is skewed to low complexity. A Phosphoserine; by PKA modification is found at Ser-251. Positions 292–423 (RRKAAHVTLL…YIKEALIAID (132 aa)) are H-S-H (helix-span-helix), dimerization. The interval 426-449 (YMNPGDQSPADSSKTMEKMEKHRK) is disordered. Ser-433 is modified (phosphoserine). A compositionally biased stretch (basic and acidic residues) spans 439–449 (KTMEKMEKHRK).

Belongs to the AP-2 family. In terms of assembly, binds DNA as a dimer. Can form homodimers or heterodimers with other AP-2 family members. Interacts with WWOX. Interacts with UBE2I. Interacts with KCTD1; this interaction represses transcription activation. Interacts with CITED2 (via C-terminus); the interaction stimulates TFAP2B-transcriptional activity. Interacts with CITED4. Interacts with MTA1. In terms of processing, sumoylated on Lys-10; which inhibits transcriptional activity. Expressed in lung, ovary and testis. Expressed in most squamous epithelia. Also, detected in several exocrine glands including the prostate, the preputial and salivary glands, serous glands of the tongue and ocular harderian glands.

It localises to the nucleus. Its function is as follows. Sequence-specific DNA-binding transcription factor that interacts with cellular enhancer elements to regulate transcription of selected genes, and which plays a key role in early embryonic development. AP-2 factors bind to the consensus sequence 5'-GCCNNNGGC-3' and activate genes involved in a large spectrum of important biological functions. TFAP2C plays a key role in early embryonic development by regulating both inner cell mass (ICM) and trophectoderm differentiation. At the 8-cell stage, during morula development, controls expression of cell-polarity genes. Upon trophoblast commitment, binds to late trophectoderm genes in blastocysts together with CDX2, and later to extra-embryonic ectoderm genes together with SOX2. Binds to both closed and open chromatin with other transcription factors. This chain is Transcription factor AP-2 gamma, found in Mus musculus (Mouse).